The following is a 72-amino-acid chain: DNA gyrase inhibitor YacG (72 aa).

Zn(2+)-binding residues include Cys-14, Cys-17, Cys-33, and Cys-37.

Belongs to the DNA gyrase inhibitor YacG family. In terms of assembly, interacts with GyrB. The cofactor is Zn(2+).

Functionally, inhibits all the catalytic activities of DNA gyrase by preventing its interaction with DNA. Acts by binding directly to the C-terminal domain of GyrB, which probably disrupts DNA binding by the gyrase. The polypeptide is DNA gyrase inhibitor YacG (Mannheimia succiniciproducens (strain KCTC 0769BP / MBEL55E)).